The chain runs to 1026 residues: Multidrug resistance protein MdtC (1026 aa).

The next 11 membrane-spanning stretches (helical) occupy residues I15–A35, E333–L353, L360–C380, L387–L407, V431–L451, F463–P483, L528–P548, L853–S873, L897–V917, P953–G973, and I984–V1004.

It belongs to the resistance-nodulation-cell division (RND) (TC 2.A.6) family. MdtC subfamily. Part of a tripartite efflux system composed of MdtA, MdtB and MdtC. MdtC forms a heteromultimer with MdtB.

The protein localises to the cell inner membrane. The chain is Multidrug resistance protein MdtC from Salmonella newport (strain SL254).